The sequence spans 240 residues: Phosphatidylserine decarboxylase proenzyme (240 aa).

Ser198 functions as the Schiff-base intermediate with substrate; via pyruvic acid in the catalytic mechanism. Position 198 is a pyruvic acid (Ser); by autocatalysis (Ser198).

Belongs to the phosphatidylserine decarboxylase family. PSD-A subfamily. In terms of assembly, heterodimer of a large membrane-associated beta subunit and a small pyruvoyl-containing alpha subunit. The cofactor is pyruvate. In terms of processing, is synthesized initially as an inactive proenzyme. Formation of the active enzyme involves a self-maturation process in which the active site pyruvoyl group is generated from an internal serine residue via an autocatalytic post-translational modification. Two non-identical subunits are generated from the proenzyme in this reaction, and the pyruvate is formed at the N-terminus of the alpha chain, which is derived from the carboxyl end of the proenzyme. The post-translation cleavage follows an unusual pathway, termed non-hydrolytic serinolysis, in which the side chain hydroxyl group of the serine supplies its oxygen atom to form the C-terminus of the beta chain, while the remainder of the serine residue undergoes an oxidative deamination to produce ammonia and the pyruvoyl prosthetic group on the alpha chain.

Its subcellular location is the cell membrane. It carries out the reaction a 1,2-diacyl-sn-glycero-3-phospho-L-serine + H(+) = a 1,2-diacyl-sn-glycero-3-phosphoethanolamine + CO2. It participates in phospholipid metabolism; phosphatidylethanolamine biosynthesis; phosphatidylethanolamine from CDP-diacylglycerol: step 2/2. Catalyzes the formation of phosphatidylethanolamine (PtdEtn) from phosphatidylserine (PtdSer). In Paramagnetospirillum magneticum (strain ATCC 700264 / AMB-1) (Magnetospirillum magneticum), this protein is Phosphatidylserine decarboxylase proenzyme.